The sequence spans 100 residues: Putative protein BCL8 (100 aa).

In terms of tissue distribution, expressed in prostate and testis.

This Homo sapiens (Human) protein is Putative protein BCL8 (NBEAP1).